We begin with the raw amino-acid sequence, 126 residues long: Fluoride-specific ion channel FluC (126 aa).

Transmembrane regions (helical) follow at residues 2–22 (IKSL…RWLL) and 36–56 (GTLV…AYFL). Positions 75 and 78 each coordinate Na(+). Transmembrane regions (helical) follow at residues 80 to 100 (FSTF…IWAL) and 105 to 125 (VHVI…TILF).

This sequence belongs to the fluoride channel Fluc/FEX (TC 1.A.43) family. Homodimer.

It localises to the cell inner membrane. The catalysed reaction is fluoride(in) = fluoride(out). Na(+) is not transported, but it plays an essential structural role and its presence is essential for fluoride channel function. In terms of biological role, fluoride-specific ion channel. Important for reducing fluoride concentration in the cell, thus reducing its toxicity. Is highly specific for fluoride ions and cannot transport chloride ions. The polypeptide is Fluoride-specific ion channel FluC (Escherichia coli O1:K1 / APEC).